The primary structure comprises 291 residues: E3 ubiquitin-protein ligase RZFP34 (291 aa).

The segment at 20 to 96 adopts a CHY-type zinc-finger fold; that stretch reads IGSGHYGCSH…VQQNCSNCGV (77 aa). Cys27, His29, Cys40, Cys41, Cys47, Cys50, His51, His66, Cys78, Cys81, Cys91, Cys94, Cys103, Cys106, His119, Cys120, Cys123, Cys126, His136, Cys137, Cys140, Cys143, His152, and Cys154 together coordinate Zn(2+). Residues 98–162 form a CTCHY-type zinc finger; the sequence is MGKYFCSKCK…QCVEGAMHHN (65 aa). The RING-type; atypical zinc-finger motif lies at 163-206; sequence CPVCFEYLFDSTRDITVLRCGHTMHLECTKDMGLHNRYTCPVCS. Ser173 bears the Phosphoserine mark. Residue Thr178 is modified to Phosphothreonine. Residue Ser208 is modified to Phosphoserine. The disordered stretch occupies residues 271 to 291; that stretch reads QRGSDSHSCSSGMPQVVGSTG.

In terms of assembly, interacts with SRK2D/2SNRK2.2, SRK2I/SNRK2.3 and SRK2E/SNRK2.6. Phosphorylated at Ser-173, Thr-178 and Ser-208 by SRK2E/SNRK2.6 in response to abscisic acid (ABA). Phosphorylation activates its E3 ubiquitin-protein ligase activity. In terms of tissue distribution, expressed in roots, leaves, and anthers and stigma of open flowers.

It localises to the nucleus. Its subcellular location is the cytoplasm. The protein localises to the endoplasmic reticulum. It catalyses the reaction S-ubiquitinyl-[E2 ubiquitin-conjugating enzyme]-L-cysteine + [acceptor protein]-L-lysine = [E2 ubiquitin-conjugating enzyme]-L-cysteine + N(6)-ubiquitinyl-[acceptor protein]-L-lysine.. The protein operates within protein modification; protein ubiquitination. Possesses E3 ubiquitin-protein ligase activity in vitro. Mediates mainly 'Lys-48'-linked polyubiquitination. Promotes abscisic acid (ABA)-induced stomatal closure, reactive oxygen species (ROS) production and drought tolerance. Involved in the regulation of stomatal aperture. This Arabidopsis thaliana (Mouse-ear cress) protein is E3 ubiquitin-protein ligase RZFP34.